A 77-amino-acid chain; its full sequence is Acyl carrier protein (77 aa).

The 76-residue stretch at 2 to 77 folds into the Carrier domain; it reads ADVMERVTKI…DVVDYINNNQ (76 aa). The residue at position 37 (S37) is an O-(pantetheine 4'-phosphoryl)serine.

It belongs to the acyl carrier protein (ACP) family. Post-translationally, 4'-phosphopantetheine is transferred from CoA to a specific serine of apo-ACP by AcpS. This modification is essential for activity because fatty acids are bound in thioester linkage to the sulfhydryl of the prosthetic group.

It is found in the cytoplasm. It participates in lipid metabolism; fatty acid biosynthesis. Its function is as follows. Carrier of the growing fatty acid chain in fatty acid biosynthesis. This Shouchella clausii (strain KSM-K16) (Alkalihalobacillus clausii) protein is Acyl carrier protein.